The primary structure comprises 175 residues: Peptide deformylase (175 aa).

The Fe cation site is built by Cys-94 and His-136. Glu-137 is a catalytic residue. His-140 serves as a coordination point for Fe cation.

This sequence belongs to the polypeptide deformylase family. Requires Fe(2+) as cofactor.

The enzyme catalyses N-terminal N-formyl-L-methionyl-[peptide] + H2O = N-terminal L-methionyl-[peptide] + formate. Its function is as follows. Removes the formyl group from the N-terminal Met of newly synthesized proteins. Requires at least a dipeptide for an efficient rate of reaction. N-terminal L-methionine is a prerequisite for activity but the enzyme has broad specificity at other positions. This chain is Peptide deformylase, found in Brucella suis biovar 1 (strain 1330).